Reading from the N-terminus, the 236-residue chain is Phosphoribosylaminoimidazole-succinocarboxamide synthase (236 aa).

It belongs to the SAICAR synthetase family.

It carries out the reaction 5-amino-1-(5-phospho-D-ribosyl)imidazole-4-carboxylate + L-aspartate + ATP = (2S)-2-[5-amino-1-(5-phospho-beta-D-ribosyl)imidazole-4-carboxamido]succinate + ADP + phosphate + 2 H(+). The protein operates within purine metabolism; IMP biosynthesis via de novo pathway; 5-amino-1-(5-phospho-D-ribosyl)imidazole-4-carboxamide from 5-amino-1-(5-phospho-D-ribosyl)imidazole-4-carboxylate: step 1/2. In Pseudomonas syringae pv. tomato (strain ATCC BAA-871 / DC3000), this protein is Phosphoribosylaminoimidazole-succinocarboxamide synthase.